The following is a 306-amino-acid chain: Ribonuclease Z (306 aa).

Residues His-63, His-65, Asp-67, His-68, His-141, Asp-211, and His-269 each coordinate Zn(2+). Catalysis depends on Asp-67, which acts as the Proton acceptor.

This sequence belongs to the RNase Z family. In terms of assembly, homodimer. Requires Zn(2+) as cofactor.

It carries out the reaction Endonucleolytic cleavage of RNA, removing extra 3' nucleotides from tRNA precursor, generating 3' termini of tRNAs. A 3'-hydroxy group is left at the tRNA terminus and a 5'-phosphoryl group is left at the trailer molecule.. In terms of biological role, zinc phosphodiesterase, which displays some tRNA 3'-processing endonuclease activity. Probably involved in tRNA maturation, by removing a 3'-trailer from precursor tRNA. This chain is Ribonuclease Z, found in Staphylococcus aureus (strain bovine RF122 / ET3-1).